The chain runs to 81 residues: Putative phytosulfokines 6 (81 aa).

The first 20 residues, 1-20 (MKQSLCLAVLFLILSTSSSA), serve as a signal peptide directing secretion. Positions 21 to 72 (IRRGKEDQEINPLVSATSVEEDSVNKLMGMEYCGEGDEECLRRRMMTESHLD) are excised as a propeptide. A sulfotyrosine mark is found at Tyr73 and Tyr75. Positions 78-81 (HHKH) are excised as a propeptide.

Belongs to the phytosulfokine family. Sulfation is important for activity and for the binding to a putative membrane receptor. In terms of processing, PSK-beta is an enzymatic derivative of PSK-alpha. As to expression, expressed in roots, leaves, stems, flowers and siliques. Most abundant in vascular bundles and in root tips.

It is found in the secreted. Functionally, promotes plant cell differentiation, organogenesis and somatic embryogenesis as well as cell proliferation. This chain is Putative phytosulfokines 6 (PSK6), found in Arabidopsis thaliana (Mouse-ear cress).